Here is a 316-residue protein sequence, read N- to C-terminus: Galectin-8 (316 aa).

2 consecutive Galectin domains span residues 18–151 and 186–316; these read YVST…IGFR and FEAR…VRSW. 3 residues coordinate a carbohydrate: Arg-68, Asn-78, and Glu-88. Residue 248–254 participates in a beta-D-galactoside binding; the sequence is WGEEERN.

In terms of assembly, homodimer. Interacts with CALCOCO2/NDP52. Interacts with PDPN; the interaction is glycosylation-dependent; may participate in connection of the lymphatic endothelium to the surrounding extracellular matrix. In terms of tissue distribution, expressed in liver, kidney, cardiac muscle, lung, and brain.

Its subcellular location is the cytoplasmic vesicle. The protein resides in the cytoplasm. The protein localises to the cytosol. In terms of biological role, beta-galactoside-binding lectin that acts as a sensor of membrane damage caused by infection and restricts the proliferation of infecting pathogens by targeting them for autophagy. Detects membrane rupture by binding beta-galactoside ligands located on the lumenal side of the endosome membrane; these ligands becoming exposed to the cytoplasm following rupture. Restricts infection by initiating autophagy via interaction with CALCOCO2/NDP52. Required to restrict infection of bacterial invasion such as S.typhimurium. Also required to restrict infection of Picornaviridae viruses. Has a marked preference for 3'-O-sialylated and 3'-O-sulfated glycans. The protein is Galectin-8 (Lgals8) of Rattus norvegicus (Rat).